The chain runs to 349 residues: tRNA pseudouridine synthase D (349 aa).

Residue Phe-27 coordinates substrate. Asp-80 functions as the Nucleophile in the catalytic mechanism. Asn-129 lines the substrate pocket. Residues 155-303 form the TRUD domain; that stretch reads GVPNYFGAQR…VEASRRAMLL (149 aa). A substrate-binding site is contributed by Phe-329.

The protein belongs to the pseudouridine synthase TruD family.

The catalysed reaction is uridine(13) in tRNA = pseudouridine(13) in tRNA. In terms of biological role, responsible for synthesis of pseudouridine from uracil-13 in transfer RNAs. The chain is tRNA pseudouridine synthase D from Salmonella dublin (strain CT_02021853).